We begin with the raw amino-acid sequence, 299 residues long: Elongation factor Ts (299 aa).

The involved in Mg(2+) ion dislocation from EF-Tu stretch occupies residues Thr-82–Val-85.

Belongs to the EF-Ts family.

It localises to the cytoplasm. In terms of biological role, associates with the EF-Tu.GDP complex and induces the exchange of GDP to GTP. It remains bound to the aminoacyl-tRNA.EF-Tu.GTP complex up to the GTP hydrolysis stage on the ribosome. This is Elongation factor Ts from Dechloromonas aromatica (strain RCB).